The chain runs to 295 residues: Protoheme IX farnesyltransferase (295 aa).

9 helical membrane passes run 8–28, 35–55, 83–103, 107–127, 132–152, 162–182, 208–228, 229–249, and 263–283; these read ITKP…FFLA, GGLF…GCVF, GVTL…LWFG, LATA…SLYL, IYGT…GYCA, LTLL…IAIF, IFWY…GGYA, GYGY…MALR, and VFIF…IDFQ.

It belongs to the UbiA prenyltransferase family. Protoheme IX farnesyltransferase subfamily.

It is found in the cell inner membrane. The enzyme catalyses heme b + (2E,6E)-farnesyl diphosphate + H2O = Fe(II)-heme o + diphosphate. The protein operates within porphyrin-containing compound metabolism; heme O biosynthesis; heme O from protoheme: step 1/1. In terms of biological role, converts heme B (protoheme IX) to heme O by substitution of the vinyl group on carbon 2 of heme B porphyrin ring with a hydroxyethyl farnesyl side group. This Chromohalobacter salexigens (strain ATCC BAA-138 / DSM 3043 / CIP 106854 / NCIMB 13768 / 1H11) protein is Protoheme IX farnesyltransferase.